The sequence spans 145 residues: Acidic phospholipase A2 (145 aa).

Positions 1–19 are cleaved as a signal peptide; that stretch reads MNPAHLLILSAVCVSLLGA. A propeptide spanning residues 20–27 is cleaved from the precursor; the sequence is ANVPPQHL. Cystine bridges form between Cys38–Cys97, Cys52–Cys144, Cys54–Cys70, Cys69–Cys125, Cys76–Cys118, Cys86–Cys111, and Cys104–Cys116. Ca(2+) contacts are provided by Tyr53, Gly55, and Gly57. Residue His73 is part of the active site. Ca(2+) is bound at residue Asp74. The active site involves Asp119.

It belongs to the phospholipase A2 family. Group I subfamily. D49 sub-subfamily. The cofactor is Ca(2+). Expressed by the venom gland.

The protein resides in the secreted. The catalysed reaction is a 1,2-diacyl-sn-glycero-3-phosphocholine + H2O = a 1-acyl-sn-glycero-3-phosphocholine + a fatty acid + H(+). In terms of biological role, PLA2 catalyzes the calcium-dependent hydrolysis of the 2-acyl groups in 3-sn-phosphoglycerides. The chain is Acidic phospholipase A2 from Bungarus multicinctus (Many-banded krait).